Reading from the N-terminus, the 223-residue chain is GrpE protein homolog, mitochondrial (223 aa).

It belongs to the GrpE family. As to quaternary structure, component of the PAM complex, at least composed of mtHsp70, mge1, tim44, pam16, pam17 and pam18.

Its subcellular location is the mitochondrion matrix. Functionally, essential component of the PAM complex, a complex required for the translocation of transit peptide-containing proteins from the inner membrane into the mitochondrial matrix in an ATP-dependent manner. Seems to control the nucleotide-dependent binding of ssc1 to substrate proteins. The protein is GrpE protein homolog, mitochondrial (mge1) of Schizosaccharomyces pombe (strain 972 / ATCC 24843) (Fission yeast).